The primary structure comprises 396 residues: NADH-quinone oxidoreductase subunit D (396 aa).

It belongs to the complex I 49 kDa subunit family. As to quaternary structure, NDH-1 is composed of 14 different subunits. Subunits NuoB, C, D, E, F, and G constitute the peripheral sector of the complex.

It is found in the cell inner membrane. The catalysed reaction is a quinone + NADH + 5 H(+)(in) = a quinol + NAD(+) + 4 H(+)(out). Functionally, NDH-1 shuttles electrons from NADH, via FMN and iron-sulfur (Fe-S) centers, to quinones in the respiratory chain. The immediate electron acceptor for the enzyme in this species is believed to be ubiquinone. Couples the redox reaction to proton translocation (for every two electrons transferred, four hydrogen ions are translocated across the cytoplasmic membrane), and thus conserves the redox energy in a proton gradient. This is NADH-quinone oxidoreductase subunit D from Orientia tsutsugamushi (strain Ikeda) (Rickettsia tsutsugamushi).